Here is a 281-residue protein sequence, read N- to C-terminus: Cytochrome c oxidase subunit 3 (281 aa).

The next 7 membrane-spanning stretches (helical) occupy residues 34–54 (PWPI…VMTF), 59–79 (NGLF…TLWF), 103–123 (GFVL…WAFF), 148–168 (WEVP…VTYA), 179–199 (VIYG…FQGF), 220–240 (ATGF…VGLF), and 259–279 (ILYW…VYWW).

This sequence belongs to the cytochrome c oxidase subunit 3 family. Component of the cytochrome c oxidase (complex IV, CIV), a multisubunit enzyme composed of a catalytic core of 3 subunits and several supernumerary subunits. The complex exists as a monomer or a dimer and forms supercomplexes (SCs) in the inner mitochondrial membrane with ubiquinol-cytochrome c oxidoreductase (cytochrome b-c1 complex, complex III, CIII).

It localises to the mitochondrion inner membrane. The catalysed reaction is 4 Fe(II)-[cytochrome c] + O2 + 8 H(+)(in) = 4 Fe(III)-[cytochrome c] + 2 H2O + 4 H(+)(out). Its function is as follows. Component of the cytochrome c oxidase, the last enzyme in the mitochondrial electron transport chain which drives oxidative phosphorylation. The respiratory chain contains 3 multisubunit complexes succinate dehydrogenase (complex II, CII), ubiquinol-cytochrome c oxidoreductase (cytochrome b-c1 complex, complex III, CIII) and cytochrome c oxidase (complex IV, CIV), that cooperate to transfer electrons derived from NADH and succinate to molecular oxygen, creating an electrochemical gradient over the inner membrane that drives transmembrane transport and the ATP synthase. Cytochrome c oxidase is the component of the respiratory chain that catalyzes the reduction of oxygen to water. Electrons originating from reduced cytochrome c in the intermembrane space (IMS) are transferred via the dinuclear copper A center (CU(A)) of subunit 2 and heme A of subunit 1 to the active site in subunit 1, a binuclear center (BNC) formed by heme A3 and copper B (CU(B)). The BNC reduces molecular oxygen to 2 water molecules using 4 electrons from cytochrome c in the IMS and 4 protons from the mitochondrial matrix. This chain is Cytochrome c oxidase subunit 3 (COX3), found in Rhizopus stolonifer (Rhizopus nigricans).